Consider the following 266-residue polypeptide: Inositol-1-monophosphatase (266 aa).

The Mg(2+) site is built by Glu-69, Asp-86, Leu-88, and Asp-89. Substrate is bound at residue Glu-69. Substrate is bound by residues 88–91, Arg-185, and Asp-214; that span reads LDGT. Asp-214 contacts Mg(2+).

This sequence belongs to the inositol monophosphatase superfamily. Mg(2+) is required as a cofactor.

It catalyses the reaction a myo-inositol phosphate + H2O = myo-inositol + phosphate. The sequence is that of Inositol-1-monophosphatase (suhB) from Mesorhizobium japonicum (strain LMG 29417 / CECT 9101 / MAFF 303099) (Mesorhizobium loti (strain MAFF 303099)).